A 146-amino-acid chain; its full sequence is Prostaglandin E synthase 3 (146 aa).

In terms of domain architecture, CS spans V1–T76. The segment at S110–E146 is disordered. Acidic residues predominate over residues G118–D139.

Belongs to the p23/wos2 family. In terms of assembly, binds to telomerase. Binds to the progesterone receptor.

It localises to the cytoplasm. It catalyses the reaction prostaglandin H2 = prostaglandin E2. It participates in lipid metabolism; prostaglandin biosynthesis. In terms of biological role, molecular chaperone. In Gallus gallus (Chicken), this protein is Prostaglandin E synthase 3 (PTGES3).